Here is a 336-residue protein sequence, read N- to C-terminus: 3-isopropylmalate dehydrogenase (336 aa).

4 residues coordinate substrate: Arg-87, Arg-97, Arg-121, and Asp-211. Positions 211, 235, and 239 each coordinate Mg(2+). 271 to 283 (GSAPDIAGQGIAD) contributes to the NAD(+) binding site.

Belongs to the isocitrate and isopropylmalate dehydrogenases family. LeuB type 2 subfamily. In terms of assembly, homodimer. Mg(2+) serves as cofactor. Requires Mn(2+) as cofactor.

The protein localises to the cytoplasm. The catalysed reaction is (2R,3S)-3-isopropylmalate + NAD(+) = 4-methyl-2-oxopentanoate + CO2 + NADH. Its pathway is amino-acid biosynthesis; L-leucine biosynthesis; L-leucine from 3-methyl-2-oxobutanoate: step 3/4. Its function is as follows. Catalyzes the oxidation of 3-carboxy-2-hydroxy-4-methylpentanoate (3-isopropylmalate) to 3-carboxy-4-methyl-2-oxopentanoate. The product decarboxylates to 4-methyl-2 oxopentanoate. The chain is 3-isopropylmalate dehydrogenase from Mycobacterium leprae (strain Br4923).